A 457-amino-acid chain; its full sequence is Multidrug resistance protein MdtK (457 aa).

The next 12 helical transmembrane spans lie at 11–31, 53–73, 93–113, 127–147, 160–180, 189–209, 243–263, 276–296, 314–334, 350–370, 387–407, and 418–438; these read LLAL…MGFV, IWLP…PVIA, WLAG…GYII, AVGY…FQVA, GMVM…IFIY, GGVG…LAMV, LPIA…ALLV, IALN…AAVT, AART…IFTV, VVTL…SDSI, IFYI…YILA, and PAGF…MMML.

The protein belongs to the multi antimicrobial extrusion (MATE) (TC 2.A.66.1) family. MdtK subfamily.

The protein localises to the cell inner membrane. Its function is as follows. Multidrug efflux pump that functions probably as a Na(+)/drug antiporter. The protein is Multidrug resistance protein MdtK of Escherichia coli O127:H6 (strain E2348/69 / EPEC).